We begin with the raw amino-acid sequence, 184 residues long: Photosystem I assembly protein Ycf4 (184 aa).

A run of 2 helical transmembrane segments spans residues 21-43 (NFFWACILFLGSLGFFLVGISSY) and 58-78 (LFVPQGIVMCFYGIAGLFISS).

This sequence belongs to the Ycf4 family.

The protein localises to the plastid. It localises to the chloroplast thylakoid membrane. In terms of biological role, seems to be required for the assembly of the photosystem I complex. The polypeptide is Photosystem I assembly protein Ycf4 (Pinus thunbergii (Japanese black pine)).